Here is a 682-residue protein sequence, read N- to C-terminus: Potassium-transporting ATPase ATP-binding subunit (682 aa).

4 consecutive transmembrane segments (helical) span residues 34-54, 62-82, 219-239, and 254-274; these read PVMF…IAMA, ALFS…ANFA, IALT…TATL, and VLVA…LSAI. The active-site 4-aspartylphosphate intermediate is the Asp-307. ATP-binding positions include Asp-344, Glu-348, 377-384, and Lys-395; that span reads FTAQSRMS. Mg(2+)-binding residues include Asp-518 and Asp-522. Transmembrane regions (helical) follow at residues 588–608, 616–636, and 656–676; these read FAII…LNIM, AILS…PLAL, and IYGL…DLLL.

It belongs to the cation transport ATPase (P-type) (TC 3.A.3) family. Type IA subfamily. The system is composed of three essential subunits: KdpA, KdpB and KdpC.

The protein resides in the cell inner membrane. The enzyme catalyses K(+)(out) + ATP + H2O = K(+)(in) + ADP + phosphate + H(+). Functionally, part of the high-affinity ATP-driven potassium transport (or Kdp) system, which catalyzes the hydrolysis of ATP coupled with the electrogenic transport of potassium into the cytoplasm. This subunit is responsible for energy coupling to the transport system and for the release of the potassium ions to the cytoplasm. This chain is Potassium-transporting ATPase ATP-binding subunit, found in Shigella sonnei (strain Ss046).